A 429-amino-acid chain; its full sequence is MRAVYAILAGLLATGSASPLEARQSGNPFVGRSLFVNPKYSESLERTRQAFLSRGDQTNAAKVQYVQNKVGTFVWISNIFLLRDIDDAIRNARAAQSRGEKPIVGLVLYNLPDRDCSAGHSSGELSLDQNGLNRYRTEYVQPFAQKLKAASDLQFAVILEPDAIGNMVTGTTAFCRNARGPQQDGIAYAIQQLQASNIHLYLDVANGGWLGWADNLKPTTILQKAGSNARIRGYSSNVSNYNPYSTNNPPPYTAGSPSADESRYATSLGNALRERGLPTNFIIDQGRVALDGARKEWGEWCNVSPAGFGQPFTTNTNNPNVDAILWVKPGGESDGTCGMSGAPQAGAWFDAYAQMLTTNAHPEIRADGGGGGSPAPGPSSTAVAPSPSATPGGNCAARWAQCGGQGWTGPTCCAQGTCQASNQWYSQCL.

Positions 1 to 17 (MRAVYAILAGLLATGSA) are cleaved as a signal peptide. Trp75 and Ser77 together coordinate substrate. Residues Asp115 and Asp162 each act as proton donor in the active site. 2 residues coordinate substrate: Asn206 and Trp209. Asn237 carries an N-linked (GlcNAc...) asparagine glycan. Positions 240, 300, 328, and 332 each coordinate substrate. The disordered stretch occupies residues 240 to 261 (NYNPYSTNNPPPYTAGSPSADE). The segment at 362-390 (PEIRADGGGGGSPAPGPSSTAVAPSPSAT) is disordered. The segment covering 378-390 (PSSTAVAPSPSAT) has biased composition (low complexity). The region spanning 394-429 (NCAARWAQCGGQGWTGPTCCAQGTCQASNQWYSQCL) is the CBM1 domain.

Belongs to the glycosyl hydrolase 6 (cellulase B) family.

The protein localises to the secreted. Functionally, probable exoglucanase that may play an important function in biomass degradation by catalyzing the hydrolysis of cellulose. This Podospora anserina (strain S / ATCC MYA-4624 / DSM 980 / FGSC 10383) (Pleurage anserina) protein is Probable exoglucanase GH6D.